The following is a 385-amino-acid chain: Carbamoyl phosphate synthase small chain (385 aa).

A CPSase region spans residues 1 to 196 (MEDALGQLAV…KLEKKKKFLF (196 aa)). The L-glutamine site is built by Ser-51, Gly-245, and Gly-247. Positions 197–384 (HIVVYDFGVK…IKLLNQVKFS (188 aa)) constitute a Glutamine amidotransferase type-1 domain. Cys-273 serves as the catalytic Nucleophile. L-glutamine is bound by residues Leu-274, Gln-277, Asn-315, and Phe-318. Catalysis depends on residues His-357 and Glu-359.

The protein belongs to the CarA family. In terms of assembly, composed of two chains; the small (or glutamine) chain promotes the hydrolysis of glutamine to ammonia, which is used by the large (or ammonia) chain to synthesize carbamoyl phosphate. Tetramer of heterodimers (alpha,beta)4.

It catalyses the reaction hydrogencarbonate + L-glutamine + 2 ATP + H2O = carbamoyl phosphate + L-glutamate + 2 ADP + phosphate + 2 H(+). The catalysed reaction is L-glutamine + H2O = L-glutamate + NH4(+). It functions in the pathway amino-acid biosynthesis; L-arginine biosynthesis; carbamoyl phosphate from bicarbonate: step 1/1. The protein operates within pyrimidine metabolism; UMP biosynthesis via de novo pathway; (S)-dihydroorotate from bicarbonate: step 1/3. Functionally, small subunit of the glutamine-dependent carbamoyl phosphate synthetase (CPSase). CPSase catalyzes the formation of carbamoyl phosphate from the ammonia moiety of glutamine, carbonate, and phosphate donated by ATP, constituting the first step of 2 biosynthetic pathways, one leading to arginine and/or urea and the other to pyrimidine nucleotides. The small subunit (glutamine amidotransferase) binds and cleaves glutamine to supply the large subunit with the substrate ammonia. In Buchnera aphidicola subsp. Schizaphis graminum (strain Sg), this protein is Carbamoyl phosphate synthase small chain.